The primary structure comprises 156 residues: Low molecular weight protein-tyrosine-phosphatase YfkJ (156 aa).

The active-site Nucleophile is C8. R14 is a catalytic residue. Residue D125 is the Proton donor of the active site.

The protein belongs to the low molecular weight phosphotyrosine protein phosphatase family.

The catalysed reaction is O-phospho-L-tyrosyl-[protein] + H2O = L-tyrosyl-[protein] + phosphate. Its activity is regulated as follows. Efficiently inhibited by Cu(2+) ion, Zn(2+) ion and N-ethylmaleimide, while the addition of Mg(2+), Ca(2+) or Fe(3+) ions has minimal effect. Inhibited in a competitive manner by vanadate. Functionally, dephosphorylates the phosphotyrosine-containing proteins. Involved in ethanol stress resistance. The polypeptide is Low molecular weight protein-tyrosine-phosphatase YfkJ (yfkJ) (Bacillus subtilis (strain 168)).